Reading from the N-terminus, the 470-residue chain is V-type proton ATPase subunit S1 (470 aa).

An N-terminal signal peptide occupies residues 1–41 (MMAAMATARVRMGPRCAQALWRMPWLPVFLSLAAAAAAAAA). Residues 42-231 (EQQVPLVLWS…TAVRPSRVAR (190 aa)) constitute a propeptide that is removed on maturation. The Lumenal portion of the chain corresponds to 42–419 (EQQVPLVLWS…EQFSYASDCA (378 aa)). Residues Asn-170, Asn-261, Asn-273, Asn-296, Asn-303, Asn-350, and Asn-357 are each glycosylated (N-linked (GlcNAc...) asparagine). A disulfide bridge connects residues Cys-371 and Cys-418. The chain crosses the membrane as a helical span at residues 420 to 440 (SFFSPGIWMGLLTSLFMLFIF). Residues 441-470 (TYGLHMILSLKTMDRFDDHKGPTISLTQIV) lie on the Cytoplasmic side of the membrane. The residue at position 465 (Ser-465) is a Phosphoserine.

Belongs to the vacuolar ATPase subunit S1 family. Accessory component of the multisubunit proton-transporting vacuolar (V)-ATPase protein pump. Interacts (via N-terminus) with ATP6AP2 (via N-terminus). Interacts with RNASEK. Interacts with TMEM106B (via C-terminus). N-glycosylated. As to expression, widely expressed, with highest levels in brain and lowest in liver and duodenum.

Its subcellular location is the endoplasmic reticulum membrane. It is found in the endoplasmic reticulum-Golgi intermediate compartment membrane. It localises to the cytoplasmic vesicle. The protein localises to the secretory vesicle. The protein resides in the synaptic vesicle membrane. Its subcellular location is the clathrin-coated vesicle membrane. Accessory subunit of the proton-transporting vacuolar (V)-ATPase protein pump, which is required for luminal acidification of secretory vesicles. Guides the V-type ATPase into specialized subcellular compartments, such as neuroendocrine regulated secretory vesicles or the ruffled border of the osteoclast, thereby regulating its activity. Involved in membrane trafficking and Ca(2+)-dependent membrane fusion. May play a role in the assembly of the V-type ATPase complex. In aerobic conditions, involved in intracellular iron homeostasis, thus triggering the activity of Fe(2+) prolyl hydroxylase (PHD) enzymes, and leading to HIF1A hydroxylation and subsequent proteasomal degradation. In islets of Langerhans cells, may regulate the acidification of dense-core secretory granules. The sequence is that of V-type proton ATPase subunit S1 (ATP6AP1) from Homo sapiens (Human).